Consider the following 497-residue polypeptide: Ammonium transporter 1 (497 aa).

Residues 1 to 32 (MSSTTDATPTPSGVNGGDSMTVNLNQFYNNGD) lie on the Extracellular side of the membrane. A helical transmembrane segment spans residues 33 to 53 (VAWILTSTALVFIMIPGVGFF). At 54–63 (YSGLARRRSA) the chain is on the cytoplasmic side. A helical transmembrane segment spans residues 64-84 (ISMLFLSMMSVAIVAFQWFFW). Topologically, residues 85–122 (GYSLTFSHEGGPYIGSLANFGLRQTLGRPSSGASSVPD) are extracellular. The helical transmembrane segment at 123–143 (ILFCVFQGMFAAITPALAIGA) threads the bilayer. Topologically, residues 144–150 (AADRGRM) are cytoplasmic. Residues 151–171 (FPCMVFMFLWTSIVYDPIAFW) form a helical membrane-spanning segment. The Extracellular portion of the chain corresponds to 172–187 (TWNPNGWLNKLGSYDF). Residues 188–208 (AGGSPVHISSGMAALAYSIVI) form a helical membrane-spanning segment. Residues 209-223 (GKRCDHGTTKYRPHN) lie on the Cytoplasmic side of the membrane. Residues 224 to 244 (VPHVVLGTVFLWFGWFGFNGG) form a helical membrane-spanning segment. The Extracellular segment spans residues 245–253 (SSAAANMRG). A helical transmembrane segment spans residues 254–274 (VMAVVVTHLAASVGGIVWCVI). Topologically, residues 275 to 281 (DFAKNRH) are cytoplasmic. A helical transmembrane segment spans residues 282–302 (WSVVGFCEGAVAGLVAITPGS). A topological domain (extracellular) is located at residue Gly-303. Residues 304–324 (FVPPWAAVVIGALGAVFCYAA) form a helical membrane-spanning segment. Residues 325–338 (TYLKKIIRVDDALD) lie on the Cytoplasmic side of the membrane. A helical membrane pass occupies residues 339–359 (IFAEHGVGGMVGNILTALFAA). At 360-394 (DYIEALDGSGTAYTGGWITHHYIQLGYQLADTVSC) the chain is on the extracellular side. Residues 395–415 (AAYSFAVSCALLFVMNYIPGL) form a helical membrane-spanning segment. The Cytoplasmic segment spans residues 416–497 (SLRVSREDEV…AESEAQAPAI (82 aa)). Residues 440–497 (YKDSTDEPPPITTSGVQYTSPTVSDSASNEKEQEHRAQNEAQKEEEYRAESEAQAPAI) are disordered. Over residues 451 to 466 (TTSGVQYTSPTVSDSA) the composition is skewed to polar residues. Residues 467–490 (SNEKEQEHRAQNEAQKEEEYRAES) show a composition bias toward basic and acidic residues.

It belongs to the ammonia transporter channel (TC 1.A.11.2) family.

It is found in the membrane. In terms of biological role, transporter for ammonium to use as a nitrogen source. Under ammonium limitation acts as an ammonium sensor, generating a signal that leads to pseudohyphal growth. The chain is Ammonium transporter 1 (amt1) from Schizosaccharomyces pombe (strain 972 / ATCC 24843) (Fission yeast).